The sequence spans 358 residues: Arogenate dehydrogenase 2, chloroplastic (358 aa).

A chloroplast-targeting transit peptide spans 1–36 (MLLHFSPAKPLISPPNLRRNSPTFLISPPRSLRIRA). The Prephenate/arogenate dehydrogenase domain occupies 59–338 (LKIAVLGFGN…KKTEQKLLND (280 aa)). The disordered stretch occupies residues 336 to 358 (LNDGGVVPMNDISSSSSSSSSSS). The segment covering 348–358 (SSSSSSSSSSS) has biased composition (low complexity).

The protein belongs to the prephenate/arogenate dehydrogenase family. In terms of tissue distribution, expressed in roots, stems, leaves, flowers, siliques and seeds. More abundant in seeds.

It localises to the plastid. The protein resides in the chloroplast. The enzyme catalyses L-arogenate + NADP(+) = L-tyrosine + CO2 + NADPH. It functions in the pathway amino-acid biosynthesis; L-tyrosine biosynthesis; L-tyrosine from L-arogenate (NADP(+) route): step 1/1. Its function is as follows. Involved in the biosynthesis of tyrosine. Has a weak prephenate dehydrogenase activity. This is Arogenate dehydrogenase 2, chloroplastic (TYRAAT2) from Arabidopsis thaliana (Mouse-ear cress).